Here is a 930-residue protein sequence, read N- to C-terminus: Translation initiation factor IF-2 (930 aa).

Residues 50–67 show a composition bias toward low complexity; it reads FKPAAAPKVEAKPAAPKV. Disordered regions lie at residues 50–217 and 260–346; these read FKPA…SSEE and EVVP…HELP. Basic and acidic residues-rich tracts occupy residues 68–90 and 110–125; these read SAEK…EAKP and FKAE…AERR. Residues 129–141 show a composition bias toward low complexity; that stretch reads KGNNRDQQQNGNR. Composition is skewed to basic and acidic residues over residues 157–167 and 262–295; these read RDNRRFNDQAK and VPEK…DGPR. The span at 309-318 shows a compositional bias: low complexity; sequence NQKNSNWNNN. The span at 337-346 shows a compositional bias: basic and acidic residues; that stretch reads VTERKFHELP. The tr-type G domain occupies 432–599; that stretch reads ERPPVVTIMG…TVLLVAEIQE (168 aa). The interval 441 to 448 is G1; sequence GHVDHGKT. 441 to 448 serves as a coordination point for GTP; it reads GHVDHGKT. Residues 466-470 are G2; the sequence is GITQH. Residues 487–490 are G3; it reads DTPG. GTP contacts are provided by residues 487-491 and 541-544; these read DTPGH and NKID. The interval 541–544 is G4; sequence NKID. Residues 577–579 are G5; that stretch reads SAK.

This sequence belongs to the TRAFAC class translation factor GTPase superfamily. Classic translation factor GTPase family. IF-2 subfamily.

It is found in the cytoplasm. Functionally, one of the essential components for the initiation of protein synthesis. Protects formylmethionyl-tRNA from spontaneous hydrolysis and promotes its binding to the 30S ribosomal subunits. Also involved in the hydrolysis of GTP during the formation of the 70S ribosomal complex. This Streptococcus pneumoniae (strain CGSP14) protein is Translation initiation factor IF-2.